We begin with the raw amino-acid sequence, 157 residues long: Probable succinate transporter subunit YjjB (157 aa).

4 helical membrane passes run 8-28 (LALA…AMVF), 50-70 (MILM…SMLG), 87-107 (VFTV…TAMI), and 129-149 (FLTA…PGLW).

This sequence belongs to the ThrE exporter (TC 2.A.79) family. In terms of assembly, the transporter is composed of YjjB and YjjP.

It is found in the cell inner membrane. In terms of biological role, involved in succinate export with YjjP. Both proteins are required for export. The protein is Probable succinate transporter subunit YjjB of Escherichia coli O157:H7 (strain EC4115 / EHEC).